Here is a 299-residue protein sequence, read N- to C-terminus: Glycine--tRNA ligase alpha subunit (299 aa).

It belongs to the class-II aminoacyl-tRNA synthetase family. Tetramer of two alpha and two beta subunits.

It localises to the cytoplasm. The catalysed reaction is tRNA(Gly) + glycine + ATP = glycyl-tRNA(Gly) + AMP + diphosphate. The sequence is that of Glycine--tRNA ligase alpha subunit from Dictyoglomus turgidum (strain DSM 6724 / Z-1310).